A 580-amino-acid polypeptide reads, in one-letter code: Glutamine--tRNA ligase (580 aa).

The 'HIGH' region motif lies at 41 to 51; the sequence is PEPNGYLHIGH. ATP is bound by residues 42 to 44 and 48 to 54; these read EPN and HIGHAKA. The L-glutamine site is built by aspartate 74 and tyrosine 218. ATP-binding positions include threonine 237, 285–286, and 293–295; these read RL and MSK. Positions 292 to 296 match the 'KMSKS' region motif; that stretch reads VMSKR.

The protein belongs to the class-I aminoacyl-tRNA synthetase family. As to quaternary structure, monomer.

The protein resides in the cytoplasm. The catalysed reaction is tRNA(Gln) + L-glutamine + ATP = L-glutaminyl-tRNA(Gln) + AMP + diphosphate. The protein is Glutamine--tRNA ligase of Xylella fastidiosa (strain 9a5c).